The primary structure comprises 473 residues: Probable glucose-6-phosphate 1-dehydrogenase C7.13c (473 aa).

3 residues coordinate NADP(+): arginine 43, tyrosine 121, and lysine 144. Residues lysine 144, 174–178 (HYTAK), glutamate 213, and aspartate 232 each bind D-glucose 6-phosphate. The active-site Proton acceptor is histidine 237. Lysine 331 is a binding site for D-glucose 6-phosphate. Lysine 341 is a binding site for NADP(+). A D-glucose 6-phosphate-binding site is contributed by glutamine 366.

This sequence belongs to the glucose-6-phosphate dehydrogenase family.

It is found in the cytoplasm. It carries out the reaction D-glucose 6-phosphate + NADP(+) = 6-phospho-D-glucono-1,5-lactone + NADPH + H(+). It functions in the pathway carbohydrate degradation; pentose phosphate pathway; D-ribulose 5-phosphate from D-glucose 6-phosphate (oxidative stage): step 1/3. Catalyzes the rate-limiting step of the oxidative pentose-phosphate pathway, which represents a route for the dissimilation of carbohydrates besides glycolysis. The main function of this enzyme is to provide reducing power (NADPH) and pentose phosphates for fatty acid and nucleic acid synthesis. This chain is Probable glucose-6-phosphate 1-dehydrogenase C7.13c, found in Schizosaccharomyces pombe (strain 972 / ATCC 24843) (Fission yeast).